Reading from the N-terminus, the 394-residue chain is Elongation factor Tu (394 aa).

In terms of domain architecture, tr-type G spans 10–204 (KPHVNVGTIG…HLDTYIPEPE (195 aa)). The segment at 19 to 26 (GHVDHGKT) is G1. 19–26 (GHVDHGKT) lines the GTP pocket. Thr-26 is a binding site for Mg(2+). The segment at 60 to 64 (GITIN) is G2. The segment at 81–84 (DCPG) is G3. GTP contacts are provided by residues 81–85 (DCPGH) and 136–139 (NKCD). Residues 136 to 139 (NKCD) form a G4 region. The G5 stretch occupies residues 174–176 (SAL).

It belongs to the TRAFAC class translation factor GTPase superfamily. Classic translation factor GTPase family. EF-Tu/EF-1A subfamily. Monomer.

The protein resides in the cytoplasm. The catalysed reaction is GTP + H2O = GDP + phosphate + H(+). GTP hydrolase that promotes the GTP-dependent binding of aminoacyl-tRNA to the A-site of ribosomes during protein biosynthesis. In Actinobacillus pleuropneumoniae serotype 5b (strain L20), this protein is Elongation factor Tu.